Consider the following 213-residue polypeptide: Urease accessory protein UreG (213 aa).

12–19 contacts GTP; that stretch reads GPVGSGKT.

The protein belongs to the SIMIBI class G3E GTPase family. UreG subfamily. Homodimer. UreD, UreF and UreG form a complex that acts as a GTP-hydrolysis-dependent molecular chaperone, activating the urease apoprotein by helping to assemble the nickel containing metallocenter of UreC. The UreE protein probably delivers the nickel.

The protein resides in the cytoplasm. In terms of biological role, facilitates the functional incorporation of the urease nickel metallocenter. This process requires GTP hydrolysis, probably effectuated by UreG. This Marinomonas sp. (strain MWYL1) protein is Urease accessory protein UreG.